The chain runs to 648 residues: Solute carrier family 23 member 2 (648 aa).

Positions 1 to 21 (MMGIGKNTASKSVEAGGSTEG) are disordered. Residues 9 to 110 (ASKSVEAGGS…LCIFLGLQHY (102 aa)) lie on the Cytoplasmic side of the membrane. Serine 70 is subject to Phosphoserine. Threonine 75 is modified (phosphothreonine). A Phosphoserine modification is found at serine 78. Phosphothreonine is present on threonine 79. Serine 81 carries the post-translational modification Phosphoserine. The chain crosses the membrane as a helical span at residues 111–131 (LTCFSGTIAVPFLLADAMCVG). Residues 132 to 139 (DDQWATSQ) lie on the Extracellular side of the membrane. A helical membrane pass occupies residues 140–160 (LIGTIFFCVGITTLLQTTFGC). A topological domain (cytoplasmic) is located at residue arginine 161. A helical transmembrane segment spans residues 162–182 (LPLFQASAFAFLAPARAILSL). The Extracellular portion of the chain corresponds to 183–216 (DKWKCNTTEITVANGTAELLEHIWHPRIQEIQGA). Asparagine 188 and asparagine 196 each carry an N-linked (GlcNAc...) asparagine glycan. Residues 217-237 (IIMSSLIEVVIGLLGLPGALL) traverse the membrane as a helical segment. Over 238–264 (RYIGPLTITPTVALIGLSGFQAAGERA) the chain is Cytoplasmic. The chain crosses the membrane as a helical span at residues 265-282 (GKHWGIAMLTIFLVLLFS). Topologically, residues 283-286 (QYAR) are extracellular. Positions 287 to 300 (NVKFPLPIYKSKKG) form an intramembrane region, helical. Topologically, residues 301–307 (WTAYKFQ) are extracellular. A helical membrane pass occupies residues 308-328 (LFKMFPIILAILVSWLLCFIF). Over 329–369 (TVTDVFPSNSTDYGYYARTDARKGVLLVAPWFKVPYPFQWG) the chain is Cytoplasmic. The chain crosses the membrane as a helical span at residues 370–390 (MPTVSAAGVIGMLSAVVASII). The Extracellular portion of the chain corresponds to 391–415 (ESIGDYYACARLSCAPPPPIHAINR). A helical transmembrane segment spans residues 416 to 436 (GIFVEGLSCVLDGIFGTGNGS). The Cytoplasmic portion of the chain corresponds to 437–459 (TSSSPNIGVLGITKVGSRRVIQY). Residues 460–480 (GAALMLGLGMVGKFSALFASL) traverse the membrane as a helical segment. The Extracellular segment spans residues 481–483 (PDP). A helical transmembrane segment spans residues 484-504 (VLGALFCTLFGMITAVGLSNL). The Cytoplasmic segment spans residues 505-514 (QFIDLNSSRN). Residues 515–535 (LFVLGFSIFFGLVLPSYLRQN) form a helical membrane-spanning segment. At 536 to 545 (PLVTGITGID) the chain is on the extracellular side. A helical membrane pass occupies residues 546-566 (QILNVLLTTAMFVGGCVAFIL). The Cytoplasmic portion of the chain corresponds to 567-648 (DNTIPGTPEE…SSDKDSQATV (82 aa)). A Phosphothreonine modification is found at threonine 647.

The protein belongs to the nucleobase:cation symporter-2 (NCS2) (TC 2.A.40) family. Interacts with CLSTN3. Post-translationally, phosphorylated. In terms of tissue distribution, expressed in metabolically active and specialized tissues, including high expression in brain and adrenals. Detected in a wide range of tissues. Expression in kidney is almost undetectable.

It is found in the cell membrane. It carries out the reaction L-ascorbate(out) + 2 Na(+)(out) = L-ascorbate(in) + 2 Na(+)(in). Its function is as follows. Sodium/ascorbate cotransporter. Mediates electrogenic uptake of vitamin C, with a stoichiometry of 2 Na(+) for each ascorbate. The polypeptide is Solute carrier family 23 member 2 (Slc23a2) (Mus musculus (Mouse)).